A 145-amino-acid chain; its full sequence is D-aminoacyl-tRNA deacylase (145 aa).

The Gly-cisPro motif, important for rejection of L-amino acids signature appears at 137–138; sequence GP.

It belongs to the DTD family. Homodimer.

It is found in the cytoplasm. The catalysed reaction is glycyl-tRNA(Ala) + H2O = tRNA(Ala) + glycine + H(+). The enzyme catalyses a D-aminoacyl-tRNA + H2O = a tRNA + a D-alpha-amino acid + H(+). Its function is as follows. An aminoacyl-tRNA editing enzyme that deacylates mischarged D-aminoacyl-tRNAs. Also deacylates mischarged glycyl-tRNA(Ala), protecting cells against glycine mischarging by AlaRS. Acts via tRNA-based rather than protein-based catalysis; rejects L-amino acids rather than detecting D-amino acids in the active site. By recycling D-aminoacyl-tRNA to D-amino acids and free tRNA molecules, this enzyme counteracts the toxicity associated with the formation of D-aminoacyl-tRNA entities in vivo and helps enforce protein L-homochirality. The polypeptide is D-aminoacyl-tRNA deacylase (Ruegeria pomeroyi (strain ATCC 700808 / DSM 15171 / DSS-3) (Silicibacter pomeroyi)).